The sequence spans 160 residues: Transcription elongation factor GreA (160 aa).

The stretch at 1–72 (MAEKTYPMTL…QISSLETKIR (72 aa)) forms a coiled coil.

Belongs to the GreA/GreB family.

In terms of biological role, necessary for efficient RNA polymerase transcription elongation past template-encoded arresting sites. The arresting sites in DNA have the property of trapping a certain fraction of elongating RNA polymerases that pass through, resulting in locked ternary complexes. Cleavage of the nascent transcript by cleavage factors such as GreA or GreB allows the resumption of elongation from the new 3'terminus. GreA releases sequences of 2 to 3 nucleotides. In Streptococcus gordonii (strain Challis / ATCC 35105 / BCRC 15272 / CH1 / DL1 / V288), this protein is Transcription elongation factor GreA.